The following is a 557-amino-acid chain: Nucleoprotein (557 aa).

The interval 54–235 is binding site for the cap structure m7GTP; sequence MRKDKRSDDD…ITKEESANNI (182 aa). Mn(2+)-binding residues include aspartate 379 and glutamate 381. Zn(2+) is bound by residues glutamate 389, cysteine 496, histidine 499, and cysteine 518. Position 522 (aspartate 522) interacts with Mn(2+).

The protein belongs to the arenaviridae nucleocapsid protein family. As to quaternary structure, homomultimerizes to form the nucleocapsid. Binds to viral genomic RNA. Interacts with glycoprotein G2. Interacts with protein Z; this interaction probably directs the encapsidated genome to budding sites. Interacts with protein L; this interaction does not interfere with Z-L interaction. Interacts with host IKBKE (via Protein kinase domain); the interaction inhibits IKBKE kinase activity.

It localises to the virion. The protein localises to the host cytoplasm. In terms of biological role, encapsidates the genome, protecting it from nucleases. The encapsidated genomic RNA is termed the nucleocapsid (NC). Serves as template for viral transcription and replication. The increased presence of protein N in host cell does not seem to trigger the switch from transcription to replication as observed in other negative strain RNA viruses. Through the interaction with host IKBKE, strongly inhibits the phosphorylation and nuclear translocation of host IRF3, a protein involved in interferon activation pathway, leading to the inhibition of interferon-beta and IRF3-dependent promoters activation. Also encodes a functional 3'-5' exoribonuclease that degrades preferentially dsRNA substrates and thereby participates in the suppression of interferon induction. This is Nucleoprotein from Calomys callosus (Large vesper mouse).